Reading from the N-terminus, the 214-residue chain is Nucleoside triphosphate pyrophosphatase (214 aa).

Catalysis depends on Asp-79, which acts as the Proton acceptor.

This sequence belongs to the Maf family. It depends on a divalent metal cation as a cofactor.

It is found in the cytoplasm. It carries out the reaction a ribonucleoside 5'-triphosphate + H2O = a ribonucleoside 5'-phosphate + diphosphate + H(+). The enzyme catalyses a 2'-deoxyribonucleoside 5'-triphosphate + H2O = a 2'-deoxyribonucleoside 5'-phosphate + diphosphate + H(+). In terms of biological role, nucleoside triphosphate pyrophosphatase. May have a dual role in cell division arrest and in preventing the incorporation of modified nucleotides into cellular nucleic acids. This chain is Nucleoside triphosphate pyrophosphatase, found in Rhodococcus jostii (strain RHA1).